The chain runs to 586 residues: 2-succinyl-5-enolpyruvyl-6-hydroxy-3-cyclohexene-1-carboxylate synthase (586 aa).

This sequence belongs to the TPP enzyme family. MenD subfamily. In terms of assembly, homodimer. It depends on Mg(2+) as a cofactor. Mn(2+) serves as cofactor. Thiamine diphosphate is required as a cofactor.

The enzyme catalyses isochorismate + 2-oxoglutarate + H(+) = 5-enolpyruvoyl-6-hydroxy-2-succinyl-cyclohex-3-ene-1-carboxylate + CO2. Its pathway is quinol/quinone metabolism; 1,4-dihydroxy-2-naphthoate biosynthesis; 1,4-dihydroxy-2-naphthoate from chorismate: step 2/7. It participates in quinol/quinone metabolism; menaquinone biosynthesis. Functionally, catalyzes the thiamine diphosphate-dependent decarboxylation of 2-oxoglutarate and the subsequent addition of the resulting succinic semialdehyde-thiamine pyrophosphate anion to isochorismate to yield 2-succinyl-5-enolpyruvyl-6-hydroxy-3-cyclohexene-1-carboxylate (SEPHCHC). The protein is 2-succinyl-5-enolpyruvyl-6-hydroxy-3-cyclohexene-1-carboxylate synthase of Geobacillus thermodenitrificans (strain NG80-2).